A 365-amino-acid chain; its full sequence is Large ribosomal subunit protein uL3 (365 aa).

A disordered region spans residues 343–365; that stretch reads RPPKKKPPVQRPQITYVSVESKQ. The span at 354–365 shows a compositional bias: polar residues; that stretch reads PQITYVSVESKQ.

It belongs to the universal ribosomal protein uL3 family. As to quaternary structure, part of the 50S ribosomal subunit. Forms a cluster with proteins L14 and L24e.

One of the primary rRNA binding proteins, it binds directly near the 3'-end of the 23S rRNA, where it nucleates assembly of the 50S subunit. This Pyrococcus furiosus (strain ATCC 43587 / DSM 3638 / JCM 8422 / Vc1) protein is Large ribosomal subunit protein uL3.